A 762-amino-acid chain; its full sequence is Primary amine oxidase, liver isozyme (762 aa).

The N-terminal stretch at 1–16 (MFIFIFLSLWTLLVMG) is a signal peptide. The disordered stretch occupies residues 23–54 (GSEEGVGKQCHPSLPPRCPSRSPSDQPWTHPD). Residue Asn-136 is glycosylated (N-linked (GlcNAc...) asparagine). Cys-197 and Cys-198 are disulfide-bonded. Asn-231 is a glycosylation site (N-linked (GlcNAc...) asparagine). Substrate is bound at residue 383–393 (YMDSGFGMGYF). Asp-385 (proton acceptor) is an active-site residue. A disulfide bridge links Cys-403 with Cys-429. Residue 467-472 (MLNYDY) participates in substrate binding. Tyr-470 acts as the Schiff-base intermediate with substrate; via topaquinone in catalysis. Position 470 is a 2',4',5'-topaquinone (Tyr-470). Cu cation is bound by residues His-519 and His-521. Ca(2+)-binding residues include Asp-528, Leu-529, Asp-530, Glu-571, Phe-662, and Asn-664. An N-linked (GlcNAc...) asparagine glycan is attached at Asn-665. Residues Glu-666, Asp-672, and Leu-673 each coordinate Ca(2+). His-683 provides a ligand contact to Cu cation. The cysteines at positions 733 and 740 are disulfide-linked.

This sequence belongs to the copper/topaquinone oxidase family. In terms of assembly, homodimer; disulfide-linked. The cofactor is Cu cation. Ca(2+) serves as cofactor. L-topaquinone is required as a cofactor. Topaquinone (TPQ) is generated by copper-dependent autoxidation of a specific tyrosyl residue. As to expression, liver.

It is found in the secreted. Its subcellular location is the extracellular space. The catalysed reaction is a primary methyl amine + O2 + H2O = an aldehyde + H2O2 + NH4(+). The sequence is that of Primary amine oxidase, liver isozyme from Bos taurus (Bovine).